A 750-amino-acid polypeptide reads, in one-letter code: Methylmalonyl-CoA mutase, mitochondrial (750 aa).

The transit peptide at 1–32 directs the protein to the mitochondrion; it reads MLRAKNQLFLLSPHYLKQVKESSGSRLIQQRL. Residue Gln-50 participates in malonyl-CoA binding. N6-acetyllysine is present on Lys-89. Residues 96 to 99 and 106 to 110 each bind malonyl-CoA; these read YPTM and TIRQY. Lys-212 carries the N6-acetyllysine modification. Malonyl-CoA contacts are provided by residues 216–218, Arg-228, Lys-255, His-265, and 304–306; these read TIQ and RLS. At Lys-335 the chain carries N6-acetyllysine. The residue at position 343 (Lys-343) is an N6-succinyllysine. At Ser-481 the chain carries Phosphoserine. Lys-595 is modified (N6-succinyllysine). An N6-acetyllysine modification is found at Lys-602. The region spanning 614–746 is the B12-binding domain; it reads RPRLLVAKMG…DDIEKCLEKK (133 aa). His-627 serves as a coordination point for adenosylcob(III)alamin.

The protein belongs to the methylmalonyl-CoA mutase family. In terms of assembly, homodimer. Interacts (the apoenzyme form) with MMAA; the interaction is GTP dependent. Requires adenosylcob(III)alamin as cofactor.

It is found in the mitochondrion matrix. The protein localises to the mitochondrion. It localises to the cytoplasm. The enzyme catalyses (R)-methylmalonyl-CoA = succinyl-CoA. With respect to regulation, inhibited by itaconyl-CoA, a metabolite that inactivates the coenzyme B12 cofactor. Catalyzes the reversible isomerization of methylmalonyl-CoA (MMCoA) (generated from branched-chain amino acid metabolism and degradation of dietary odd chain fatty acids and cholesterol) to succinyl-CoA (3-carboxypropionyl-CoA), a key intermediate of the tricarboxylic acid cycle. This Pongo abelii (Sumatran orangutan) protein is Methylmalonyl-CoA mutase, mitochondrial (MMUT).